A 348-amino-acid chain; its full sequence is Small ribosomal subunit biogenesis GTPase RsgA (348 aa).

The CP-type G domain occupies 72–230 (RNQLSRPAIA…IADTPGFNQP (159 aa)). Residues 121 to 124 (TKAD) and 172 to 180 (GPSGVGKSS) each bind GTP. Residues C255, C260, H262, and C268 each coordinate Zn(2+). Positions 305–322 (AKSDRQGQQRLEPLLDAK) are enriched in basic and acidic residues. A disordered region spans residues 305–348 (AKSDRQGQQRLEPLLDAKKYRRRSRRQQHQHVNPMAEEVLDSEW). Positions 323-333 (KYRRRSRRQQH) are enriched in basic residues.

This sequence belongs to the TRAFAC class YlqF/YawG GTPase family. RsgA subfamily. In terms of assembly, monomer. Associates with 30S ribosomal subunit, binds 16S rRNA. It depends on Zn(2+) as a cofactor.

It localises to the cytoplasm. Its function is as follows. One of several proteins that assist in the late maturation steps of the functional core of the 30S ribosomal subunit. Helps release RbfA from mature subunits. May play a role in the assembly of ribosomal proteins into the subunit. Circularly permuted GTPase that catalyzes slow GTP hydrolysis, GTPase activity is stimulated by the 30S ribosomal subunit. In Thermosynechococcus vestitus (strain NIES-2133 / IAM M-273 / BP-1), this protein is Small ribosomal subunit biogenesis GTPase RsgA.